A 100-amino-acid polypeptide reads, in one-letter code: Aspartyl/glutamyl-tRNA(Asn/Gln) amidotransferase subunit C (100 aa).

Belongs to the GatC family. As to quaternary structure, heterotrimer of A, B and C subunits.

It catalyses the reaction L-glutamyl-tRNA(Gln) + L-glutamine + ATP + H2O = L-glutaminyl-tRNA(Gln) + L-glutamate + ADP + phosphate + H(+). The catalysed reaction is L-aspartyl-tRNA(Asn) + L-glutamine + ATP + H2O = L-asparaginyl-tRNA(Asn) + L-glutamate + ADP + phosphate + 2 H(+). Its function is as follows. Allows the formation of correctly charged Asn-tRNA(Asn) or Gln-tRNA(Gln) through the transamidation of misacylated Asp-tRNA(Asn) or Glu-tRNA(Gln) in organisms which lack either or both of asparaginyl-tRNA or glutaminyl-tRNA synthetases. The reaction takes place in the presence of glutamine and ATP through an activated phospho-Asp-tRNA(Asn) or phospho-Glu-tRNA(Gln). This is Aspartyl/glutamyl-tRNA(Asn/Gln) amidotransferase subunit C from Rickettsia peacockii (strain Rustic).